The sequence spans 82 residues: uncharacterized protein (82 aa).

The protein localises to the plastid. Its subcellular location is the chloroplast. This is an uncharacterized protein from Vicia faba (Broad bean).